Here is a 354-residue protein sequence, read N- to C-terminus: Decorin (354 aa).

The first 16 residues, 1–16 (MKATLVLFLLAQVSWA), serve as a signal peptide directing secretion. Positions 17 to 30 (GPFEQRGLFDFMLE) are excised as a propeptide. S34 is a glycosylation site (O-linked (Xyl...) (glycosaminoglycan) serine). 2 disulfides stabilise this stretch: C49-C55 and C53-C62. LRR repeat units lie at residues 68–88 (DKVP…NNKI), 89–112 (TEIK…NNKI), 113–136 (SKIS…KNHL), 137–157 (KELP…DNEI), 158–181 (TKLK…GNPL), 182–207 (KNSG…DTNI), 208–228 (TAIP…GNKI), 229–252 (AKVD…FNSI), 253–276 (TVVE…NNKL), 277–299 (LRVP…NNNI), 300–329 (SEVG…SNPV), and 330–354 (RYWQ…GNYK). N-linked (GlcNAc...) asparagine glycosylation is present at N206. 3 N-linked (GlcNAc...) asparagine glycosylation sites follow: N241, N257, and N298. A disulfide bridge links C308 with C341.

Belongs to the small leucine-rich proteoglycan (SLRP) family. SLRP class I subfamily. Binds to type I and type II collagen, fibronectin and TGF-beta. Forms a ternary complex with MFAP2 and ELN. Interacts with DPT. The attached glycosaminoglycan chain can be either chondroitin sulfate or dermatan sulfate depending upon the tissue of origin.

The protein localises to the secreted. It is found in the extracellular space. The protein resides in the extracellular matrix. Its function is as follows. May affect the rate of fibrils formation. May be implicated in the dilatation of the rat cervix. The sequence is that of Decorin (Dcn) from Rattus norvegicus (Rat).